Reading from the N-terminus, the 633-residue chain is Probable sodium/potassium/calcium exchanger CG1090 (633 aa).

Residues Met-1–Gly-21 form the signal peptide. Residues Asp-22 to His-111 are Extracellular-facing. Residues Gly-112–Cys-132 form a helical membrane-spanning segment. At Asp-133–Thr-157 the chain is on the cytoplasmic side. An Alpha-1 repeat occupies Val-153–Phe-193. A helical membrane pass occupies residues Phe-158–Ala-178. Residues Lys-179–Asp-181 are Extracellular-facing. Residues Ile-182 to Cys-202 traverse the membrane as a helical segment. The Cytoplasmic segment spans residues Ala-203 to Asp-220. 2 helical membrane-spanning segments follow: residues Cys-221–Ser-241 and Cys-242–Asn-262. Residues Thr-263–Pro-427 are Extracellular-facing. 3 stretches are compositionally biased toward polar residues: residues Tyr-298–Lys-310, Ala-320–Asn-333, and Gln-395–Gly-405. A disordered region spans residues Tyr-298–Asp-422. The span at Lys-411–Asp-422 shows a compositional bias: basic and acidic residues. A helical membrane pass occupies residues Met-428 to Cys-448. Residues Lys-449–Phe-468 are Cytoplasmic-facing. The chain crosses the membrane as a helical span at residues Leu-469–Ile-489. Topologically, residues Gly-490–Met-500 are extracellular. A helical transmembrane segment spans residues Gly-501 to Ile-521. An Alpha-2 repeat occupies Ala-506–Asn-537. The Cytoplasmic segment spans residues Lys-522–Gly-535. A helical membrane pass occupies residues Ser-536 to Ile-556. Residues Lys-557–Gly-568 are Extracellular-facing. The helical transmembrane segment at Leu-569–Leu-589 threads the bilayer. The Cytoplasmic portion of the chain corresponds to Asn-590–Arg-597. Residues Leu-598 to Leu-618 traverse the membrane as a helical segment. The Extracellular portion of the chain corresponds to Asn-619–Tyr-633.

Belongs to the Ca(2+):cation antiporter (CaCA) (TC 2.A.19) family. SLC24A subfamily.

It is found in the membrane. Its function is as follows. May function in the removal and maintenance of calcium homeostasis. Transports one Ca(2+) and 1 K(+) in exchange for 4 Na(+). In Drosophila melanogaster (Fruit fly), this protein is Probable sodium/potassium/calcium exchanger CG1090.